The following is a 676-amino-acid chain: Envelope glycoprotein (676 aa).

An N-terminal signal peptide occupies residues 1-32 (MGGLSLLQLPRDKFRKSSFFVWVIILFQKAFS). Residues 33 to 185 (MPLGVVTNST…FAEGVIAFLI (153 aa)) form a receptor binding region. The Extracellular segment spans residues 33–650 (MPLGVVTNST…DDNWWTGWRQ (618 aa)). Residue N40 is glycosylated (N-linked (GlcNAc...) asparagine; by host). Disulfide bonds link C53–C609, C108–C135, C121–C147, C511–C556, and C601–C608. N-linked (GlcNAc...) asparagine; by host glycans are attached at residues N204, N208, N238, N257, N268, N296, N314, and N366. The interval 305 to 485 (ELSFEALSLN…STSNGLITST (181 aa)) is mucin-like region. Disordered stretches follow at residues 337–373 (RKYS…GRRV) and 404–461 (RPSS…LTTP). Low complexity-rich tracts occupy residues 405-428 (PSSS…TPTT) and 449-461 (PGPT…LTTP). N463 carries N-linked (GlcNAc...) asparagine; by host glycosylation. Positions 524–539 (HNAAGIAWIPYFGPGA) are fusion peptide. Residues 554 to 595 (LVCGLRQLANETTQALQLFLRATTELRTYTILNRKAIDFLLR) adopt a coiled-coil conformation. A glycan (N-linked (GlcNAc...) asparagine; by host) is linked at N563. A coiled-coil region spans residues 615–634 (WTKNITDKINQIIHDFIDNP). A glycan (N-linked (GlcNAc...) asparagine; by host) is linked at N618. Residues 651–671 (WIPAGIGITGIIIAIIALLCV) form a helical membrane-spanning segment. Residues C670 and C672 are each lipidated (S-palmitoyl cysteine; by host). At 672 to 676 (CKLLC) the chain is on the cytoplasmic side.

Belongs to the filoviruses glycoprotein family. As to quaternary structure, homotrimer; each monomer consists of a GP1 and a GP2 subunit linked by disulfide bonds. The resulting peplomers (GP1,2) protrude from the virus surface as spikes. Interacts with host integrin alpha-V/ITGAV. Interacts with host CLEC10A. Binds also to host CD209 and CLEC4M/DC-SIGN(R). Interacts with host FOLR1. Interacts with BST2; this interaction inhibits the antiviral effect of BST2 and this allows viral release from infected cells. Interacts with host FCN1; this interaction enhances viral entry. Interacts with host TLR4; this interaction induces cell death in T-lymphocytes or proinflammatory cytokines and SOCS1 production in monocytes. Interacts with host entry receptor NPC1. In terms of assembly, GP1 and GP2delta are part of GP1,2delta soluble complexes released by ectodomain shedding. N-glycosylated. In terms of processing, O-glycosylated in the mucin-like region. Post-translationally, palmitoylation of GP2 is not required for its function. Specific enzymatic cleavages in vivo yield mature proteins. The precursor is processed into GP1 and GP2 by host cell furin in the trans Golgi, and maybe by other host proteases, to yield the mature GP1 and GP2 proteins. The cleavage site corresponds to the furin optimal cleavage sequence [KR]-X-[KR]-R. This cleavage does not seem to be required for function. After the internalization of the virus into cell endosomes, GP1 C-terminus is removed by the endosomal proteases cathepsin B, cathepsin L, or both, leaving a 19-kDa N-terminal fragment which is further digested by cathepsin B. Proteolytic processing of GP1,2 by host ADAM17 can remove the transmembrane anchor of GP2 and leads to shedding of complexes consisting in GP1 and truncated GP2 (GP1,2delta).

The protein resides in the virion membrane. The protein localises to the host cell membrane. It localises to the secreted. Its function is as follows. Trimeric GP1,2 complexes form the virion surface spikes and mediate the viral entry processes, with GP1 acting as the receptor-binding subunit and GP2 as the membrane fusion subunit. At later times of infection, down-regulates the expression of various host cell surface molecules that are essential for immune surveillance and cell adhesion. Down-modulates several integrins including ITGA1, ITGA2, ITGA3, ITGA4, ITGA5, ITGA6, ITGAV and ITGB1. This decrease in cell adhesion molecules may lead to cell detachment, contributing to the disruption of blood vessel integrity and hemorrhages developed during infection (cytotoxicity). Interacts with host TLR4 and thereby stimulates the differentiation and activation of monocytes leading to bystander death of T-lymphocytes. Down-regulates as well the function of host natural killer cells. Counteracts the antiviral effect of host BST2/tetherin that restricts release of progeny virions from infected cells. However, cooperates with VP40 and host BST2 to activate canonical NF-kappa-B pathway in a manner dependent on neddylation. In terms of biological role, functions as a decoy for anti-GP1,2 antibodies thereby contributing to viral immune evasion. Interacts and activates host macrophages and dendritic cells inducing up-regulation of cytokine transcription. This effect is mediated throught activation of host TLR4. Responsible for binding to the receptor(s) on target cells. Interacts with CD209/DC-SIGN and CLEC4M/DC-SIGNR which act as cofactors for virus entry into dendritic cells (DCs) and endothelial cells. Binding to the macrophage specific lectin CLEC10A also seems to enhance virus infectivity. Interaction with FOLR1/folate receptor alpha may be a cofactor for virus entry in some cell types, although results are contradictory. Members of the Tyro3 receptor tyrosine kinase family also seem to be cell entry factors in filovirus infection. Once attached, the virions are internalized through clathrin-dependent endocytosis and/or macropinocytosis. After internalization of the virus into the endosomes of the host cell, proteolysis of GP1 by two cysteine proteases, CTSB/cathepsin B and CTSL/cathepsin L removes the glycan cap and allows GP1 binding to the host entry receptor NPC1. NPC1-binding, Ca(2+) and acidic pH induce a conformational change of GP2, which unmasks its fusion peptide and permit membranes fusion. Functionally, acts as a class I viral fusion protein. Under the current model, the protein has at least 3 conformational states: pre-fusion native state, pre-hairpin intermediate state, and post-fusion hairpin state. During viral and target cell membrane fusion, the coiled coil regions (heptad repeats) assume a trimer-of-hairpins structure, positioning the fusion peptide in close proximity to the C-terminal region of the ectodomain. The formation of this structure appears to drive apposition and subsequent fusion of viral and target cell membranes. Responsible for penetration of the virus into the cell cytoplasm by mediating the fusion of the membrane of the endocytosed virus particle with the endosomal membrane. Low pH in endosomes induces an irreversible conformational change in GP2, releasing the fusion hydrophobic peptide. This chain is Envelope glycoprotein (GP), found in Sudan ebolavirus (strain Human/Uganda/Gulu/2000) (SEBOV).